Here is a 150-residue protein sequence, read N- to C-terminus: Cyanate hydratase (150 aa).

Catalysis depends on residues Arg-91, Glu-94, and Ser-117.

This sequence belongs to the cyanase family.

It catalyses the reaction cyanate + hydrogencarbonate + 3 H(+) = NH4(+) + 2 CO2. In terms of biological role, catalyzes the reaction of cyanate with bicarbonate to produce ammonia and carbon dioxide. The polypeptide is Cyanate hydratase (Synechococcus sp. (strain CC9311)).